Consider the following 162-residue polypeptide: Nucleotide-binding protein ACIAD3137 (162 aa).

This sequence belongs to the YajQ family.

In terms of biological role, nucleotide-binding protein. This Acinetobacter baylyi (strain ATCC 33305 / BD413 / ADP1) protein is Nucleotide-binding protein ACIAD3137.